We begin with the raw amino-acid sequence, 43 residues long: Protein PsbN (43 aa).

Residues 5–27 (ALVAISISRLLVSFTGYALYTAF) traverse the membrane as a helical segment.

Belongs to the PsbN family.

The protein resides in the plastid. Its subcellular location is the chloroplast thylakoid membrane. Functionally, may play a role in photosystem I and II biogenesis. In Bowenia serrulata (Byfield fern), this protein is Protein PsbN.